A 175-amino-acid polypeptide reads, in one-letter code: Ribosome maturation factor RimM (175 aa).

The 74-residue stretch at 99–172 (SIEFTWEHFI…KLTMIIPDGL (74 aa)) folds into the PRC barrel domain.

The protein belongs to the RimM family. As to quaternary structure, binds ribosomal protein uS19.

The protein resides in the cytoplasm. In terms of biological role, an accessory protein needed during the final step in the assembly of 30S ribosomal subunit, possibly for assembly of the head region. Essential for efficient processing of 16S rRNA. May be needed both before and after RbfA during the maturation of 16S rRNA. It has affinity for free ribosomal 30S subunits but not for 70S ribosomes. This chain is Ribosome maturation factor RimM, found in Porphyromonas gingivalis (strain ATCC BAA-308 / W83).